The primary structure comprises 108 residues: Anthranilate 1,2-dioxygenase ferredoxin subunit (108 aa).

The region spanning 9–105 is the Rieske domain; it reads WHPLGAIDEF…IRIVDGQVEV (97 aa). [2Fe-2S] cluster contacts are provided by Cys-49, His-51, Cys-68, and His-71.

Belongs to the bacterial ring-hydroxylating dioxygenase ferredoxin component family. Part of a multicomponent enzyme system composed of a reductase (AndAa), a ferredoxin (AndAb) and a two-subunit oxygenase component (AndAc and AndAd). It depends on [2Fe-2S] cluster as a cofactor.

Its pathway is aromatic compound metabolism; anthranilate degradation via hydroxylation; catechol from anthranilate: step 1/1. Its function is as follows. Part of the multicomponent anthranilate dioxygenase, that converts anthranilate to catechol. This protein seems to be a 2Fe-2S ferredoxin. This Burkholderia cepacia (Pseudomonas cepacia) protein is Anthranilate 1,2-dioxygenase ferredoxin subunit.